A 525-amino-acid polypeptide reads, in one-letter code: Cobyric acid synthase (525 aa).

The GATase cobBQ-type domain maps to glutamate 251 to leucine 452. Cysteine 332 acts as the Nucleophile in catalysis. Histidine 444 is an active-site residue.

It belongs to the CobB/CobQ family. CobQ subfamily.

It functions in the pathway cofactor biosynthesis; adenosylcobalamin biosynthesis. Catalyzes amidations at positions B, D, E, and G on adenosylcobyrinic A,C-diamide. NH(2) groups are provided by glutamine, and one molecule of ATP is hydrogenolyzed for each amidation. The sequence is that of Cobyric acid synthase from Pelotomaculum thermopropionicum (strain DSM 13744 / JCM 10971 / SI).